Reading from the N-terminus, the 221-residue chain is Casparian strip membrane protein 3 (221 aa).

Positions 1 to 12 (MDIEKAASRREE) are enriched in basic and acidic residues. The segment at 1–28 (MDIEKAASRREEEEPIVQRPKLDKGKGK) is disordered. The Cytoplasmic portion of the chain corresponds to 1–58 (MDIEKAASRREEEEPIVQRPKLDKGKGKAHVFAPPMNYNRIMDKHKQEKVSAAGWKRG). A helical transmembrane segment spans residues 59–79 (VAIFDFVLRLIAAITAMAAAA). Residues 80 to 109 (KMATTEETLPFFTQFLQFQAEYTDLPTMSS) lie on the Extracellular side of the membrane. The chain crosses the membrane as a helical span at residues 110–130 (FVIVNSIVGGYLTLSLPFSIV). Over 131-148 (CILRPLAVPPRLFLIICD) the chain is Cytoplasmic. A helical transmembrane segment spans residues 149 to 169 (TAMMGLTMMAASASAAIVYLA). Residues 170–194 (HNGNSSSNWLPVCQQFGDFCQGTSG) lie on the Extracellular side of the membrane. The N-linked (GlcNAc...) asparagine glycan is linked to Asn173. Residues 195-215 (AVVASFIAATLLMFLVILSAF) traverse the membrane as a helical segment. The Cytoplasmic segment spans residues 216–221 (ALKRST).

This sequence belongs to the Casparian strip membrane proteins (CASP) family. As to quaternary structure, homodimer and heterodimers.

It is found in the cell membrane. Its function is as follows. Regulates membrane-cell wall junctions and localized cell wall deposition. Required for establishment of the Casparian strip membrane domain (CSD) and the subsequent formation of Casparian strips, a cell wall modification of the root endodermis that determines an apoplastic barrier between the intraorganismal apoplasm and the extraorganismal apoplasm and prevents lateral diffusion. The chain is Casparian strip membrane protein 3 from Arabidopsis lyrata subsp. lyrata (Lyre-leaved rock-cress).